The primary structure comprises 358 residues: Aminomethyltransferase (358 aa).

This sequence belongs to the GcvT family. In terms of assembly, the glycine cleavage system is composed of four proteins: P, T, L and H.

The enzyme catalyses N(6)-[(R)-S(8)-aminomethyldihydrolipoyl]-L-lysyl-[protein] + (6S)-5,6,7,8-tetrahydrofolate = N(6)-[(R)-dihydrolipoyl]-L-lysyl-[protein] + (6R)-5,10-methylene-5,6,7,8-tetrahydrofolate + NH4(+). Its function is as follows. The glycine cleavage system catalyzes the degradation of glycine. This chain is Aminomethyltransferase, found in Francisella tularensis subsp. mediasiatica (strain FSC147).